The following is a 486-amino-acid chain: Glutamyl-tRNA(Gln) amidotransferase subunit A (486 aa).

Residues lysine 74 and serine 149 each act as charge relay system in the active site. Serine 173 acts as the Acyl-ester intermediate in catalysis.

It belongs to the amidase family. GatA subfamily. Heterotrimer of A, B and C subunits.

It catalyses the reaction L-glutamyl-tRNA(Gln) + L-glutamine + ATP + H2O = L-glutaminyl-tRNA(Gln) + L-glutamate + ADP + phosphate + H(+). Its function is as follows. Allows the formation of correctly charged Gln-tRNA(Gln) through the transamidation of misacylated Glu-tRNA(Gln) in organisms which lack glutaminyl-tRNA synthetase. The reaction takes place in the presence of glutamine and ATP through an activated gamma-phospho-Glu-tRNA(Gln). The chain is Glutamyl-tRNA(Gln) amidotransferase subunit A from Prochlorococcus marinus (strain MIT 9313).